Here is a 117-residue protein sequence, read N- to C-terminus: Large ribosomal subunit protein bL20 (117 aa).

This sequence belongs to the bacterial ribosomal protein bL20 family.

Functionally, binds directly to 23S ribosomal RNA and is necessary for the in vitro assembly process of the 50S ribosomal subunit. It is not involved in the protein synthesizing functions of that subunit. This Actinobacillus pleuropneumoniae serotype 7 (strain AP76) protein is Large ribosomal subunit protein bL20.